A 368-amino-acid chain; its full sequence is H-2 class I histocompatibility antigen, K-D alpha chain (368 aa).

The first 21 residues, 1 to 21, serve as a signal peptide directing secretion; the sequence is MAPCTLLLLLAAALAPTQTRA. The alpha-1 stretch occupies residues 22–111; it reads GPHSLRYFVT…AQRYYNQSKG (90 aa). Over 22–305 the chain is Extracellular; that stretch reads GPHSLRYFVT…KLPPSTVSNT (284 aa). The N-linked (GlcNAc...) asparagine glycan is linked to asparagine 107. The interval 112 to 203 is alpha-2; that stretch reads GSHTFQRMFG…ELGNETLLRT (92 aa). Cysteine 122 and cysteine 185 are joined by a disulfide. 2 N-linked (GlcNAc...) asparagine glycosylation sites follow: asparagine 197 and asparagine 277. An alpha-3 region spans residues 204 to 295; that stretch reads DSPKAHVTYH…GLPEPLTLRW (92 aa). Positions 206 to 294 constitute an Ig-like C1-type domain; it reads PKAHVTYHPR…KGLPEPLTLR (89 aa). Cysteine 224 and cysteine 280 are disulfide-bonded. Residues 296–305 are connecting peptide; the sequence is KLPPSTVSNT. Residues 306 to 328 traverse the membrane as a helical segment; it reads VIIAVLVVLGAAIVTGAVVAFVM. Topologically, residues 329 to 368 are cytoplasmic; sequence KMRRNTGGKGVNYALAPGSQTSDLSLPDGKVMVHDPHSLA. Residues serine 350 and serine 353 each carry the phosphoserine modification.

Belongs to the MHC class I family. As to quaternary structure, heterodimer of an alpha chain and a beta chain (beta-2-microglobulin).

The protein localises to the membrane. Functionally, involved in the presentation of foreign antigens to the immune system. This chain is H-2 class I histocompatibility antigen, K-D alpha chain (H2-K1), found in Mus musculus (Mouse).